A 70-amino-acid chain; its full sequence is MFTRAQVRRILQRVPGKQRFGIYRFLPFFFVLGGTMEWIMIKVRVGQETFYDVYRRKASERQYQRRLEDE.

Residues Met-1–Arg-19 are Mitochondrial matrix-facing. The chain crosses the membrane as a helical span at residues Phe-20–Ile-41. At Lys-42–Glu-70 the chain is on the mitochondrial intermembrane side.

The protein belongs to the UQCC5 family. Associates with the mitochondrial ribosome. Interacts with UQCC6. Interacts with MT-CYB; interacts with newly synthesizes MT-CYB. Forms a complex, named COMB/coordinator of mitochondrial CYTB biogenesis, composed of UQCC1, UQCC2, UQCC4, UQCC5 and UQCC6; regulates MT-CYB synthesis and promotes its membrane insertion.

It localises to the mitochondrion inner membrane. Functionally, required for the assembly and stability of the mitochondrial ubiquinol-cytochrome c reductase complex (complex III (CIII) or cytochrome b-c1 complex), a multisubunit transmembrane complex that is part of the mitochondrial electron transport chain (ETC) which drives oxidative phosphorylation. Mediates early complex III biogenesis. Participates in regulating the levels of electron transport chain proteins, and therefore energy supply, in response to changes in energy demand. Also involved in the first steps of cytochrome c oxidase complex (complex IV) assembly. This chain is Ubiquinol-cytochrome c reductase complex assembly factor 5, found in Homo sapiens (Human).